The chain runs to 289 residues: ATP synthase gamma chain (289 aa).

This sequence belongs to the ATPase gamma chain family. F-type ATPases have 2 components, CF(1) - the catalytic core - and CF(0) - the membrane proton channel. CF(1) has five subunits: alpha(3), beta(3), gamma(1), delta(1), epsilon(1). CF(0) has three main subunits: a, b and c.

Its subcellular location is the cell inner membrane. Produces ATP from ADP in the presence of a proton gradient across the membrane. The gamma chain is believed to be important in regulating ATPase activity and the flow of protons through the CF(0) complex. The chain is ATP synthase gamma chain from Acinetobacter baumannii (strain AB307-0294).